Reading from the N-terminus, the 686-residue chain is MFWRDITLSVWRKKTTGLKTKKRLLPLVLAAALCSSPVWAEEATFTANFKDTDLKSFIETVGANLNKTIIMGPGVQGKVSIRTMTPLNERQYYQLFLNLLEAQGYAVVPMENDVLKVVKSSAAKVEPLPLVGEGSDNYAGDEMVTKVVPVRNVSVRELAPILRQMIDSAGSGNVVNYDPSNVIMLTGRASVVERLTEVIQRVDHAGNRTEEVIPLDNASASEIARVLESLTKNSGENQPATLKSQIVADERTNSVIVSGDPATRDKMRRLIRRLDSEMERSGNSQVFYLKYSKAEDLVDVLKQVSGTLTAAKEEAEGTVGSGREIVSIAASKHSNALIVTAPQDIMQSLQSVIEQLDIRRAQVHVEALIVEVAEGSNINFGVQWASKDAGLMQFANGTQIPIGTLGAAISQAKPQKGSTVISENGATTINPDTNGDLSTLAQLLSGFSGTAVGVVKGDWMALVQAVKNDSSSNVLSTPSITTLDNQEAFFMVGQDVPVLTGSTVGSNNSNPFNTVERKKVGIMLKVTPQINEGNAVQMVIEQEVSKVEGQTSLDVVFGERKLKTTVLANDGELIVLGGLMDDQAGESVAKVPLLGDIPLIGNLFKSTADKKEKRNLMVFIRPTILRDGMAADGVSQRKYNYMRAEQIYRDEQGLSLMPHTAQPVLPAQNQALPPEVRAFLNAGRTR.

The N-terminal stretch at 1–40 is a signal peptide; it reads MFWRDITLSVWRKKTTGLKTKKRLLPLVLAAALCSSPVWA. Residues 41–140 are N0, contacts GspC2; sequence EEATFTANFK…VGEGSDNYAG (100 aa). The interval 142-206 is N1; sequence EMVTKVVPVR…EVIQRVDHAG (65 aa). An N2 region spans residues 207 to 279; it reads NRTEEVIPLD…LIRRLDSEME (73 aa). The segment at 282-357 is N3; that stretch reads GNSQVFYLKY…SLQSVIEQLD (76 aa). The tract at residues 360–627 is secretin; the sequence is RAQVHVEALI…VFIRPTILRD (268 aa). The interval 414–433 is cap gate; it reads PQKGSTVISENGATTINPDT. The segment at 629–686 is s domain, contacts AspS2; it reads MAADGVSQRKYNYMRAEQIYRDEQGLSLMPHTAQPVLPAQNQALPPEVRAFLNAGRTR.

It belongs to the bacterial secretin family. GSP D subfamily. As to quaternary structure, forms a cylindrical channel with 15 subunits, each of which interacts with the surrounding pilotin AspS2 proteins (also called GspS-beta). Interacts with inner cell membrane protein GspC2 in the periplasm. Forms multimers in the outer membrane. The isolated N0 domain forms dimers that self-assemble into rings.

The protein localises to the cell outer membrane. Its function is as follows. Part of a type II secretion system (T2SS, formerly general secretion pathway, GSP) for the export of folded proteins across the outer membrane. This subunit forms the outer membrane channel. The protein is Secretin GspD 2 (gspD2) of Escherichia coli O78:H11 (strain H10407 / ETEC).